The primary structure comprises 194 residues: dCTP deaminase, dUMP-forming (194 aa).

DCTP is bound by residues 104-109 (RSSLGR), Asp122, 130-132 (TLE), Gln151, Tyr165, Lys172, and Gln176. Glu132 (proton donor/acceptor) is an active-site residue.

Belongs to the dCTP deaminase family. As to quaternary structure, homotrimer.

The catalysed reaction is dCTP + 2 H2O = dUMP + NH4(+) + diphosphate. The protein operates within pyrimidine metabolism; dUMP biosynthesis; dUMP from dCTP: step 1/1. Its function is as follows. Bifunctional enzyme that catalyzes both the deamination of dCTP to dUTP and the hydrolysis of dUTP to dUMP without releasing the toxic dUTP intermediate. In Dictyoglomus thermophilum (strain ATCC 35947 / DSM 3960 / H-6-12), this protein is dCTP deaminase, dUMP-forming.